Consider the following 276-residue polypeptide: Apulose-4-phosphate transketolase subunit A (276 aa).

This sequence belongs to the transketolase family. In terms of assembly, probable heterodimer composed of AptA and AptB. The cofactor is thiamine diphosphate.

The catalysed reaction is apulose 4-phosphate + D-glyceraldehyde 3-phosphate = D-xylulose 5-phosphate + dihydroxyacetone phosphate. It functions in the pathway carbohydrate metabolism. Functionally, involved in catabolism of D-apiose. Catalyzes the transfer of the glycolaldehyde group from apulose-4-phosphate to D-glyceraldehyde 3-phosphate, generating dihydroxyacetone phosphate and D-xylulose-5-phosphate. The sequence is that of Apulose-4-phosphate transketolase subunit A from Actinobacillus succinogenes (strain ATCC 55618 / DSM 22257 / CCUG 43843 / 130Z).